The chain runs to 259 residues: Ribonuclease PH (259 aa).

Phosphate is bound by residues R88 and G126–R128.

It belongs to the RNase PH family. As to quaternary structure, homohexameric ring arranged as a trimer of dimers.

It catalyses the reaction tRNA(n+1) + phosphate = tRNA(n) + a ribonucleoside 5'-diphosphate. Functionally, phosphorolytic 3'-5' exoribonuclease that plays an important role in tRNA 3'-end maturation. Removes nucleotide residues following the 3'-CCA terminus of tRNAs; can also add nucleotides to the ends of RNA molecules by using nucleoside diphosphates as substrates, but this may not be physiologically important. Probably plays a role in initiation of 16S rRNA degradation (leading to ribosome degradation) during starvation. The polypeptide is Ribonuclease PH (Mycolicibacterium smegmatis (strain ATCC 700084 / mc(2)155) (Mycobacterium smegmatis)).